Consider the following 305-residue polypeptide: UDP-3-O-acyl-N-acetylglucosamine deacetylase (305 aa).

Zn(2+) is bound by residues His79, His238, and Asp242. Residue His265 is the Proton donor of the active site.

The protein belongs to the LpxC family. It depends on Zn(2+) as a cofactor.

The enzyme catalyses a UDP-3-O-[(3R)-3-hydroxyacyl]-N-acetyl-alpha-D-glucosamine + H2O = a UDP-3-O-[(3R)-3-hydroxyacyl]-alpha-D-glucosamine + acetate. Its pathway is glycolipid biosynthesis; lipid IV(A) biosynthesis; lipid IV(A) from (3R)-3-hydroxytetradecanoyl-[acyl-carrier-protein] and UDP-N-acetyl-alpha-D-glucosamine: step 2/6. Functionally, catalyzes the hydrolysis of UDP-3-O-myristoyl-N-acetylglucosamine to form UDP-3-O-myristoylglucosamine and acetate, the committed step in lipid A biosynthesis. This is UDP-3-O-acyl-N-acetylglucosamine deacetylase from Enterobacter sp. (strain 638).